The following is a 203-amino-acid chain: Superoxide dismutase [Mn] (203 aa).

Mn(2+) contacts are provided by His27, His81, Asp164, and His168.

Belongs to the iron/manganese superoxide dismutase family. The cofactor is Mn(2+).

It carries out the reaction 2 superoxide + 2 H(+) = H2O2 + O2. Destroys superoxide anion radicals which are normally produced within the cells and which are toxic to biological systems. This chain is Superoxide dismutase [Mn] (sodA), found in Xanthomonas campestris pv. campestris (strain 8004).